The primary structure comprises 265 residues: UPF0294 protein KPK_4510 (265 aa).

It belongs to the UPF0294 family.

The protein localises to the cytoplasm. In Klebsiella pneumoniae (strain 342), this protein is UPF0294 protein KPK_4510.